The chain runs to 1608 residues: Mitogen-activated protein kinase kinase kinase 4 (1608 aa).

A compositionally biased stretch (low complexity) spans 1-23 (MREAAAALVPPPAFAVTPAAAME). Disordered stretches follow at residues 1-136 (MREA…ENVE) and 429-478 (IPSP…RQPI). Positions 24 to 37 (EPPPPPPPPPPPPE) are enriched in pro residues. Positions 66-76 (SDLEDFSDETN) are enriched in acidic residues. Serine 84 bears the Phosphoserine mark. Residues 91-101 (QMKRMSTKHQR) are compositionally biased toward basic residues. Serine 431 bears the Phosphoserine mark. Residue threonine 447 is modified to Phosphothreonine. Residues serine 456 and serine 457 each carry the phosphoserine modification. The segment covering 456-466 (SSTDESEEEQI) has biased composition (acidic residues). The residue at position 458 (threonine 458) is a Phosphothreonine. 3 positions are modified to phosphoserine: serine 461, serine 481, and serine 499. Disordered stretches follow at residues 1157–1190 (CHSD…GSPA), 1202–1231 (ASRP…SVPE), and 1244–1274 (FRSL…TRRS). The span at 1217-1230 (SISSAHDTRGSSVP) shows a compositional bias: polar residues. Phosphoserine is present on residues serine 1252 and serine 1274. Residues 1252-1261 (SPTEERDEPA) are compositionally biased toward basic and acidic residues. One can recognise a Protein kinase domain in the interval 1343 to 1601 (WQRGNKIGEG…ASQLLDHSFV (259 aa)). ATP is bound by residues 1349–1357 (IGEGQYGKV) and lysine 1372. The active-site Proton acceptor is the aspartate 1463.

The protein belongs to the protein kinase superfamily. STE Ser/Thr protein kinase family. MAP kinase kinase kinase subfamily. Monomer and homodimer. Homodimerization enhances kinase activity. Interacts with TRAF4; this promotes homodimerization. Binds both upstream activators and downstream substrates in multimolecular complexes. Interacts with AXIN1 and DIXDC1; interaction with DIXDC1 prevents interaction with AXIN1. Interacts with GADD45 and MAP2K6. Interacts with ZFP36; this interaction enhances the association with SH3KBP1/CIN85. Interacts with SH3KBP1; this interaction enhances the association with ZFP36. Interacts with CDC42. Mg(2+) serves as cofactor. As to expression, expressed at high levels in heart, placenta, skeletal muscle and pancreas, and at lower levels in other tissues.

The protein resides in the cytoplasm. It localises to the perinuclear region. The enzyme catalyses L-seryl-[protein] + ATP = O-phospho-L-seryl-[protein] + ADP + H(+). It catalyses the reaction L-threonyl-[protein] + ATP = O-phospho-L-threonyl-[protein] + ADP + H(+). Its activity is regulated as follows. N-terminal autoinhibitory domain interacts with the C-terminal kinase domain, inhibiting kinase activity, and preventing interaction with its substrate, MAP2K6. The GADD45 proteins activate the kinase by binding to the N-terminal domain. Activated by phosphorylation on Thr-1505. Functionally, component of a protein kinase signal transduction cascade. Activates the CSBP2, P38 and JNK MAPK pathways, but not the ERK pathway. Specifically phosphorylates and activates MAP2K4 and MAP2K6. The chain is Mitogen-activated protein kinase kinase kinase 4 (MAP3K4) from Homo sapiens (Human).